The chain runs to 102 residues: ATP-dependent Clp protease adapter protein ClpS (102 aa).

The protein belongs to the ClpS family. As to quaternary structure, binds to the N-terminal domain of the chaperone ClpA.

Functionally, involved in the modulation of the specificity of the ClpAP-mediated ATP-dependent protein degradation. The sequence is that of ATP-dependent Clp protease adapter protein ClpS from Shewanella pealeana (strain ATCC 700345 / ANG-SQ1).